A 314-amino-acid polypeptide reads, in one-letter code: Coiled-coil domain-containing protein 42 like-2 (314 aa).

2 coiled-coil regions span residues 34–133 (RLLE…KGTL) and 175–231 (NKLL…FQWE).

This sequence belongs to the CFAP73 family.

The polypeptide is Coiled-coil domain-containing protein 42 like-2 (Xenopus tropicalis (Western clawed frog)).